A 172-amino-acid polypeptide reads, in one-letter code: MAILIPASFGRLTITSRAQVRVRVSASANQRTIRRDSVDWVKETSSFFEEDKRPIMLFDGVCNLCNGGVKFVRDHDRNRSIRFEALQSEAGKKLLLRSGRAPDDISSVVLVENDRSYIKSEAVLKIMKYIDLPFPQLAFFLQFAPLFVRDFLYENVANNRYAMFGRSDSCEL.

The transit peptide at 1–25 (MAILIPASFGRLTITSRAQVRVRVS) directs the protein to the chloroplast.

It belongs to the DCC thiol-disulfide oxidoreductase family.

It localises to the plastid. Its subcellular location is the chloroplast. In Arabidopsis thaliana (Mouse-ear cress), this protein is DCC family protein At1g52590, chloroplastic.